The primary structure comprises 372 residues: N-methyl-L-tryptophan oxidase (372 aa).

Asp-4–His-34 is an FAD binding site. Cys-308 carries the post-translational modification S-8alpha-FAD cysteine.

The protein belongs to the MSOX/MTOX family. MTOX subfamily. Monomer. FAD is required as a cofactor.

It carries out the reaction N(alpha)-methyl-L-tryptophan + O2 + H2O = L-tryptophan + formaldehyde + H2O2. Its function is as follows. Catalyzes the oxidative demethylation of N-methyl-L-tryptophan. This is N-methyl-L-tryptophan oxidase from Escherichia coli O157:H7.